We begin with the raw amino-acid sequence, 144 residues long: Small ribosomal subunit protein uS12 (144 aa).

Position 103 is a 3-methylthioaspartic acid (aspartate 103). Residues 125 to 144 (QQGRSRYGAKKGKAAPAKKK) are disordered. The segment covering 131–144 (YGAKKGKAAPAKKK) has biased composition (basic residues).

Belongs to the universal ribosomal protein uS12 family. As to quaternary structure, part of the 30S ribosomal subunit. Contacts proteins S8 and S17. May interact with IF1 in the 30S initiation complex.

With S4 and S5 plays an important role in translational accuracy. Functionally, interacts with and stabilizes bases of the 16S rRNA that are involved in tRNA selection in the A site and with the mRNA backbone. Located at the interface of the 30S and 50S subunits, it traverses the body of the 30S subunit contacting proteins on the other side and probably holding the rRNA structure together. The combined cluster of proteins S8, S12 and S17 appears to hold together the shoulder and platform of the 30S subunit. The sequence is that of Small ribosomal subunit protein uS12 from Dehalococcoides mccartyi (strain ATCC BAA-2100 / JCM 16839 / KCTC 5957 / BAV1).